Reading from the N-terminus, the 319-residue chain is Protein StrN (319 aa).

Its pathway is antibiotic biosynthesis; streptomycin biosynthesis. The sequence is that of Protein StrN (strN) from Streptomyces griseus.